A 283-amino-acid polypeptide reads, in one-letter code: Lipoyl synthase (283 aa).

[4Fe-4S] cluster-binding residues include C35, C40, C46, C61, C65, C68, and S273. One can recognise a Radical SAM core domain in the interval 47–262 (FRSRQATFLI…RERALAMGFK (216 aa)).

This sequence belongs to the radical SAM superfamily. Lipoyl synthase family. [4Fe-4S] cluster serves as cofactor.

The protein resides in the cytoplasm. It catalyses the reaction [[Fe-S] cluster scaffold protein carrying a second [4Fe-4S](2+) cluster] + N(6)-octanoyl-L-lysyl-[protein] + 2 oxidized [2Fe-2S]-[ferredoxin] + 2 S-adenosyl-L-methionine + 4 H(+) = [[Fe-S] cluster scaffold protein] + N(6)-[(R)-dihydrolipoyl]-L-lysyl-[protein] + 4 Fe(3+) + 2 hydrogen sulfide + 2 5'-deoxyadenosine + 2 L-methionine + 2 reduced [2Fe-2S]-[ferredoxin]. The protein operates within protein modification; protein lipoylation via endogenous pathway; protein N(6)-(lipoyl)lysine from octanoyl-[acyl-carrier-protein]: step 2/2. Catalyzes the radical-mediated insertion of two sulfur atoms into the C-6 and C-8 positions of the octanoyl moiety bound to the lipoyl domains of lipoate-dependent enzymes, thereby converting the octanoylated domains into lipoylated derivatives. The chain is Lipoyl synthase from Geotalea uraniireducens (strain Rf4) (Geobacter uraniireducens).